Consider the following 342-residue polypeptide: Oxygen-dependent coproporphyrinogen-III oxidase (342 aa).

Position 107 (serine 107) interacts with substrate. A divalent metal cation is bound by residues histidine 111 and histidine 121. Residue histidine 121 is the Proton donor of the active site. Residue 123-125 (NYR) participates in substrate binding. Residues histidine 155 and histidine 185 each contribute to the a divalent metal cation site. Residues 277–312 (YVEFNLVYDRGTIFGLQTNGRTESILMSLPPLVRWE) form an important for dimerization region.

It belongs to the aerobic coproporphyrinogen-III oxidase family. As to quaternary structure, homodimer. Requires a divalent metal cation as cofactor.

It localises to the cytoplasm. The catalysed reaction is coproporphyrinogen III + O2 + 2 H(+) = protoporphyrinogen IX + 2 CO2 + 2 H2O. It functions in the pathway porphyrin-containing compound metabolism; protoporphyrin-IX biosynthesis; protoporphyrinogen-IX from coproporphyrinogen-III (O2 route): step 1/1. Its function is as follows. Involved in the heme and chlorophyll biosynthesis. Catalyzes the aerobic oxidative decarboxylation of propionate groups of rings A and B of coproporphyrinogen-III to yield the vinyl groups in protoporphyrinogen-IX. In Synechococcus sp. (strain ATCC 27144 / PCC 6301 / SAUG 1402/1) (Anacystis nidulans), this protein is Oxygen-dependent coproporphyrinogen-III oxidase.